A 399-amino-acid polypeptide reads, in one-letter code: Tryptophan synthase beta chain (399 aa).

Lys90 carries the N6-(pyridoxal phosphate)lysine modification.

The protein belongs to the TrpB family. As to quaternary structure, tetramer of two alpha and two beta chains. Pyridoxal 5'-phosphate is required as a cofactor.

The catalysed reaction is (1S,2R)-1-C-(indol-3-yl)glycerol 3-phosphate + L-serine = D-glyceraldehyde 3-phosphate + L-tryptophan + H2O. It functions in the pathway amino-acid biosynthesis; L-tryptophan biosynthesis; L-tryptophan from chorismate: step 5/5. In terms of biological role, the beta subunit is responsible for the synthesis of L-tryptophan from indole and L-serine. This is Tryptophan synthase beta chain from Phocaeicola vulgatus (strain ATCC 8482 / DSM 1447 / JCM 5826 / CCUG 4940 / NBRC 14291 / NCTC 11154) (Bacteroides vulgatus).